The chain runs to 260 residues: Homeobox protein CDX-1 (260 aa).

Residues lysine 149–asparagine 208 constitute a DNA-binding region (homeobox). Residues tyrosine 152–tyrosine 173 form an interaction with DNA region. Residues arginine 191–alanine 202 form an interaction with 5-mCpG DNA region. A disordered region spans residues glutamate 204 to proline 260. 2 stretches are compositionally biased toward low complexity: residues glutamine 213–threonine 223 and serine 240–leucine 252.

The protein belongs to the Caudal homeobox family.

It localises to the nucleus. Plays a role in transcriptional regulation. Involved in activated KRAS-mediated transcriptional activation of PRKD1. Binds to the PRKD1 promoter. Could play a role in the terminal differentiation of the intestine. Binds preferentially to methylated DNA. In Gallus gallus (Chicken), this protein is Homeobox protein CDX-1 (CDX1).